We begin with the raw amino-acid sequence, 230 residues long: Octanoyltransferase (230 aa).

A BPL/LPL catalytic domain is found at 38–215; that stretch reads AGGADTLLLL…AVCAALDGVL (178 aa). Substrate contacts are provided by residues 76–83, 145–147, and 158–160; these read RGGKITWH, AIG, and GFA. Catalysis depends on C176, which acts as the Acyl-thioester intermediate.

It belongs to the LipB family.

It is found in the cytoplasm. It catalyses the reaction octanoyl-[ACP] + L-lysyl-[protein] = N(6)-octanoyl-L-lysyl-[protein] + holo-[ACP] + H(+). It functions in the pathway protein modification; protein lipoylation via endogenous pathway; protein N(6)-(lipoyl)lysine from octanoyl-[acyl-carrier-protein]: step 1/2. Its function is as follows. Catalyzes the transfer of endogenously produced octanoic acid from octanoyl-acyl-carrier-protein onto the lipoyl domains of lipoate-dependent enzymes. Lipoyl-ACP can also act as a substrate although octanoyl-ACP is likely to be the physiological substrate. The protein is Octanoyltransferase of Mycobacterium bovis (strain BCG / Tokyo 172 / ATCC 35737 / TMC 1019).